Reading from the N-terminus, the 371-residue chain is N-acetyldiaminopimelate deacetylase (371 aa).

The active site involves aspartate 68. The active-site Proton acceptor is glutamate 127.

Belongs to the peptidase M20A family. N-acetyldiaminopimelate deacetylase subfamily.

It carries out the reaction N-acetyl-(2S,6S)-2,6-diaminopimelate + H2O = (2S,6S)-2,6-diaminopimelate + acetate. It functions in the pathway amino-acid biosynthesis; L-lysine biosynthesis via DAP pathway; LL-2,6-diaminopimelate from (S)-tetrahydrodipicolinate (acetylase route): step 3/3. Its function is as follows. Catalyzes the conversion of N-acetyl-diaminopimelate to diaminopimelate and acetate. This Listeria welshimeri serovar 6b (strain ATCC 35897 / DSM 20650 / CCUG 15529 / CIP 8149 / NCTC 11857 / SLCC 5334 / V8) protein is N-acetyldiaminopimelate deacetylase.